We begin with the raw amino-acid sequence, 137 residues long: Lysozyme (137 aa).

Positions 1–20 (MSAVLVLALVLLSLTCVTDA) are cleaved as a signal peptide. The I-type lysozyme domain maps to 21–134 (ISDACLTCIC…WNAVKNQGCS (114 aa)). 6 disulfide bridges follow: cysteine 25-cysteine 102, cysteine 30-cysteine 37, cysteine 42-cysteine 51, cysteine 64-cysteine 84, cysteine 74-cysteine 80, and cysteine 98-cysteine 116. The Proton donor role is filled by glutamate 33. Residue aspartate 45 is the Nucleophile of the active site. Substrate is bound at residue 57–63 (KKSYWID). Substrate contacts are provided by residues tyrosine 88 and 109 to 111 (HNG).

This sequence belongs to the glycosyl hydrolase 22 family. Type-I lysozyme subfamily.

Its subcellular location is the secreted. It carries out the reaction Hydrolysis of (1-&gt;4)-beta-linkages between N-acetylmuramic acid and N-acetyl-D-glucosamine residues in a peptidoglycan and between N-acetyl-D-glucosamine residues in chitodextrins.. Has bacteriolytic activity. May play a role in digestion and in the host defense mechanisms against invading microbes. This is Lysozyme (lysoz) from Ostrea edulis (Native oyster).